We begin with the raw amino-acid sequence, 229 residues long: Nectarin-1 (229 aa).

Residues 1-32 (MAAFGIKSKIFQIMEMTILFLFAISIDRYCFA) form the signal peptide. Cys42 and Cys57 are disulfide-bonded. The N-linked (GlcNAc...) asparagine glycan is linked to Asn60. A Cupin type-1 domain is found at 69–217 (FAISKPGATN…TFQINIEDVQ (149 aa)). The Mn(2+) site is built by His117, His119, Glu124, and His163.

This sequence belongs to the germin family. Monomer. In the absence of manganese, it forms tetrameric and pentameric forms which show superoxide dismutase activity. The cofactor is Mn(2+). Post-translationally, glycosylated.

The protein localises to the secreted. It localises to the extracellular space. Its subcellular location is the apoplast. It catalyses the reaction 2 superoxide + 2 H(+) = H2O2 + O2. May interact with bacterial adhesins thereby protecting the reproductive tissues from microbial attack. Has no oxalate oxidase activity. The protein is Nectarin-1 (NEC1) of Nicotiana plumbaginifolia (Leadwort-leaved tobacco).